A 286-amino-acid chain; its full sequence is E3 SUMO-protein ligase K-bZIP (286 aa).

2 disordered regions span residues 1–22 and 106–130; these read MPRM…EKDE and WTLS…SKRR.

In terms of assembly, interacts with host HDAC1 and HDAC2, these interactions suppress HDAC activities. Interacts with protein ORF57. Interacts with protein vPK. Sumoylated.

The protein operates within protein modification; protein sumoylation. In terms of biological role, SUMO E3 ligase that plays a role in viral gene regulation and is essential for viral reactivation. Disrupts host G1 cell cycle control thus allowing viral transcription and translation to proceed at the early stages of infection. Catalyzes its own SUMO modification as well as that of its interacting partners such as host TP53 and RB1. Regulates viral gene expression and reactivation and may mediate the SUMOylation of viral promoters in the low methylated 'Lys-9' histone H3 (H3K9me) region which results in a diminution of viral gene expression after reactivation. SUMOylates also host histone lysine demethylase 4A/KDM4A, an essential step for complete enrichment of SUMO-2/3 on the viral genome during viral transactivation and reactivation. This Human herpesvirus 8 type P (isolate GK18) (HHV-8) protein is E3 SUMO-protein ligase K-bZIP (K8).